Here is an 82-residue protein sequence, read N- to C-terminus: MKSQTVLISIFIFSFFALHQCMQMDVGEIEGSNKISIGKCVPAQCSVSFFKRDCWCCFRDQSMCSKTQKECESNPRCPPLKF.

The signal sequence occupies residues 1 to 23 (MKSQTVLISIFIFSFFALHQCMQ). Intrachain disulfides connect cysteine 40–cysteine 56, cysteine 45–cysteine 77, cysteine 54–cysteine 71, and cysteine 57–cysteine 64.

Belongs to the MEG family. Expressed exclusively in ovule embryo sacs and in early developing endosperms.

Maternally-contributed central cell peptide regulating suspensor development and correct auxin distribution in early developing embryos. In Arabidopsis thaliana (Mouse-ear cress), this protein is EMBRYO SURROUNDING FACTOR 1.2 (ESF1.2).